A 208-amino-acid chain; its full sequence is Casparian strip membrane protein 2 (208 aa).

The interval 1-23 (MDSKSGRSESAINIPESNSTKHK) is disordered. Residues 1–46 (MDSKSGRSESAINIPESNSTKHKSTVVHTATKVAAVAPRGGGWRRG) lie on the Cytoplasmic side of the membrane. Positions 8-18 (SESAINIPESN) are enriched in polar residues. The chain crosses the membrane as a helical span at residues 47–67 (VSIFDFILRICALAAALAATA). Residues 68 to 96 (TMGTTDQTLPFFTQFFQFQASYDDLPAFT) are Extracellular-facing. The chain crosses the membrane as a helical span at residues 97–117 (FFVVANGIASGYLVLSLPFSI). The Cytoplasmic segment spans residues 118 to 129 (ATIVRPHAAAIK). Residues 130–150 (LLLIIFDTVMVAFTAAAAAAA) form a helical membrane-spanning segment. The Extracellular segment spans residues 151–184 (AAIVYLAHNGNSKTNWFAICQQFNDFCQRVSGAV). The chain crosses the membrane as a helical span at residues 185 to 205 (VASFVAAVILIFLVVLSAVAI). Over 206–208 (RKH) the chain is Cytoplasmic.

This sequence belongs to the Casparian strip membrane proteins (CASP) family. As to quaternary structure, homodimer and heterodimers.

It localises to the cell membrane. Regulates membrane-cell wall junctions and localized cell wall deposition. Required for establishment of the Casparian strip membrane domain (CSD) and the subsequent formation of Casparian strips, a cell wall modification of the root endodermis that determines an apoplastic barrier between the intraorganismal apoplasm and the extraorganismal apoplasm and prevents lateral diffusion. This Triphysaria pusilla (Dwarf owl's-clover) protein is Casparian strip membrane protein 2.